A 777-amino-acid chain; its full sequence is Lon protease (777 aa).

In terms of domain architecture, Lon N-terminal spans 11–204 (IPVLPLRDVV…FLMAIMESEI (194 aa)). ATP is bound at residue 356 to 363 (GPPGVGKT). The Lon proteolytic domain occupies 592–773 (TNQIGQVIGL…EEVLKLSLEK (182 aa)). Residues serine 679 and lysine 722 contribute to the active site.

The protein belongs to the peptidase S16 family. Homohexamer. Organized in a ring with a central cavity.

It localises to the cytoplasm. The enzyme catalyses Hydrolysis of proteins in presence of ATP.. In terms of biological role, ATP-dependent serine protease that mediates the selective degradation of mutant and abnormal proteins as well as certain short-lived regulatory proteins. Required for cellular homeostasis and for survival from DNA damage and developmental changes induced by stress. Degrades polypeptides processively to yield small peptide fragments that are 5 to 10 amino acids long. Binds to DNA in a double-stranded, site-specific manner. This chain is Lon protease, found in Buchnera aphidicola subsp. Acyrthosiphon pisum (strain APS) (Acyrthosiphon pisum symbiotic bacterium).